The following is a 222-amino-acid chain: Triosephosphate isomerase (222 aa).

9–11 (NYK) contacts substrate. The active-site Electrophile is His-93. Glu-141 acts as the Proton acceptor in catalysis. Residues Ile-146, Gly-181, and 202 to 203 (AS) contribute to the substrate site.

The protein belongs to the triosephosphate isomerase family. In terms of assembly, homotetramer; dimer of dimers.

It is found in the cytoplasm. It catalyses the reaction D-glyceraldehyde 3-phosphate = dihydroxyacetone phosphate. It functions in the pathway carbohydrate biosynthesis; gluconeogenesis. It participates in carbohydrate degradation; glycolysis; D-glyceraldehyde 3-phosphate from glycerone phosphate: step 1/1. Involved in the gluconeogenesis. Catalyzes stereospecifically the conversion of dihydroxyacetone phosphate (DHAP) to D-glyceraldehyde-3-phosphate (G3P). This chain is Triosephosphate isomerase, found in Methanosarcina mazei (strain ATCC BAA-159 / DSM 3647 / Goe1 / Go1 / JCM 11833 / OCM 88) (Methanosarcina frisia).